A 351-amino-acid polypeptide reads, in one-letter code: AT-hook motif nuclear-localized protein 10 (351 aa).

The interval 1–151 (MSGSETGLMA…RPPGSSSKRL (151 aa)) is disordered. Residues 23–37 (HQQQQHSQAQPQQSQ) are compositionally biased toward low complexity. Residues 60 to 77 (SPPQQYQPNSAGENSVLN) show a composition bias toward polar residues. The Bipartite nuclear localization signal motif lies at 97-105 (KKRRGRPRK). 2 consecutive DNA-binding regions (a.T hook) follow at residues 97 to 109 (KKRR…YGPD) and 138 to 149 (KKRGRPPGSSSK). A PPC domain is found at 159 to 301 (TGIGFTPHVL…QMGLSSPVLP (143 aa)). 2 stretches are compositionally biased toward polar residues: residues 310-325 (MTPS…SESS) and 334-351 (IHQS…MPWK). The interval 310–351 (MTPSSPQSRGTMSESSCGGGHGSPIHQSTGGPYNNTINMPWK) is disordered.

The protein resides in the nucleus. Its function is as follows. Transcription factor that specifically binds AT-rich DNA sequences related to the nuclear matrix attachment regions (MARs). This is AT-hook motif nuclear-localized protein 10 from Arabidopsis thaliana (Mouse-ear cress).